The chain runs to 276 residues: Diaminopimelate epimerase (276 aa).

Positions 13, 46, and 66 each coordinate substrate. C75 functions as the Proton donor in the catalytic mechanism. Residues 76–77, N159, N192, and 210–211 each bind substrate; these read GN and ER. C219 serves as the catalytic Proton acceptor. A substrate-binding site is contributed by 220-221; it reads GT.

It belongs to the diaminopimelate epimerase family. Homodimer.

The protein resides in the cytoplasm. It catalyses the reaction (2S,6S)-2,6-diaminopimelate = meso-2,6-diaminopimelate. Its pathway is amino-acid biosynthesis; L-lysine biosynthesis via DAP pathway; DL-2,6-diaminopimelate from LL-2,6-diaminopimelate: step 1/1. Its function is as follows. Catalyzes the stereoinversion of LL-2,6-diaminopimelate (L,L-DAP) to meso-diaminopimelate (meso-DAP), a precursor of L-lysine and an essential component of the bacterial peptidoglycan. The chain is Diaminopimelate epimerase from Pseudomonas aeruginosa (strain UCBPP-PA14).